Consider the following 143-residue polypeptide: Spliceosomal protein DIB1 (143 aa).

The residue at position 2 (Ala-2) is an N-acetylalanine.

Belongs to the DIM1 family. As to quaternary structure, component of the U4/U6-U5 tri-snRNP complex composed of the U4, U6 and U5 snRNAs and at least PRP3, PRP4, PRP6, PRP8, PRP18, PRP31, PRP38, SNU13, SNU23, SNU66, SNU114, SPP381, SMB1, SMD1, SMD2, SMD3, SMX2, SMX3, LSM2, LSM3, LSM4, LSM5, LSM6, LSM7, LSM8, BRR2 and DIB1.

The protein localises to the nucleus. In terms of biological role, essential role in pre-mRNA splicing. Also essential for entry into mitosis (G2/M progression) as well as for chromosome segregation during mitosis. This is Spliceosomal protein DIB1 (DIB1) from Saccharomyces cerevisiae (strain ATCC 204508 / S288c) (Baker's yeast).